Here is a 164-residue protein sequence, read N- to C-terminus: Urease subunit beta (164 aa).

Composition is skewed to polar residues over residues 1 to 10 and 20 to 32; these read MSTKTNSTKA and TNRG…GYSE. The interval 1–32 is disordered; sequence MSTKTNSTKATSEKTDSLKTNRGTKSSAGYSE.

The protein belongs to the urease beta subunit family. In terms of assembly, heterotrimer of UreA (gamma), UreB (beta) and UreC (alpha) subunits. Three heterotrimers associate to form the active enzyme.

The protein resides in the cytoplasm. The enzyme catalyses urea + 2 H2O + H(+) = hydrogencarbonate + 2 NH4(+). It participates in nitrogen metabolism; urea degradation; CO(2) and NH(3) from urea (urease route): step 1/1. This chain is Urease subunit beta, found in Yersinia enterocolitica serotype O:8 / biotype 1B (strain NCTC 13174 / 8081).